A 183-amino-acid chain; its full sequence is uncharacterized protein (183 aa).

This is an uncharacterized protein from Methanocaldococcus jannaschii (strain ATCC 43067 / DSM 2661 / JAL-1 / JCM 10045 / NBRC 100440) (Methanococcus jannaschii).